A 98-amino-acid polypeptide reads, in one-letter code: MNLKDQEQTKIVNNLIAKTDYLLSNNLNPLESVRSEINKTLALTHSTYQQDSNIKKSWIQKSVQKIKDLFINIFSSNKTKNEPKLNLTSDKILKKYKY.

This is an uncharacterized protein from Rickettsia conorii (strain ATCC VR-613 / Malish 7).